A 463-amino-acid polypeptide reads, in one-letter code: Fumarate hydratase class II (463 aa).

Substrate contacts are provided by residues 95 to 97 (SGT), 126 to 129 (HPND), 136 to 138 (SSN), and threonine 184. The active-site Proton donor/acceptor is the histidine 185. Serine 315 is an active-site residue. Substrate-binding positions include serine 316 and 321–323 (KIN).

The protein belongs to the class-II fumarase/aspartase family. Fumarase subfamily. In terms of assembly, homotetramer.

Its subcellular location is the cytoplasm. It catalyses the reaction (S)-malate = fumarate + H2O. The protein operates within carbohydrate metabolism; tricarboxylic acid cycle; (S)-malate from fumarate: step 1/1. Involved in the TCA cycle. Catalyzes the stereospecific interconversion of fumarate to L-malate. The sequence is that of Fumarate hydratase class II from Chlamydia muridarum (strain MoPn / Nigg).